The sequence spans 110 residues: Cytochrome c oxidase subunit 4B (110 aa).

The next 3 helical transmembrane spans lie at Met29–Glu49, Phe55–Phe75, and Phe89–Trp109.

This sequence belongs to the cytochrome c oxidase bacterial subunit 4 family.

The protein localises to the cell membrane. It carries out the reaction 4 Fe(II)-[cytochrome c] + O2 + 8 H(+)(in) = 4 Fe(III)-[cytochrome c] + 2 H2O + 4 H(+)(out). This Bacillus sp. (strain PS3) protein is Cytochrome c oxidase subunit 4B (caaD).